Here is a 252-residue protein sequence, read N- to C-terminus: Imidazole glycerol phosphate synthase subunit HisF (252 aa).

Active-site residues include D11 and D130.

This sequence belongs to the HisA/HisF family. Heterodimer of HisH and HisF.

The protein resides in the cytoplasm. It catalyses the reaction 5-[(5-phospho-1-deoxy-D-ribulos-1-ylimino)methylamino]-1-(5-phospho-beta-D-ribosyl)imidazole-4-carboxamide + L-glutamine = D-erythro-1-(imidazol-4-yl)glycerol 3-phosphate + 5-amino-1-(5-phospho-beta-D-ribosyl)imidazole-4-carboxamide + L-glutamate + H(+). The protein operates within amino-acid biosynthesis; L-histidine biosynthesis; L-histidine from 5-phospho-alpha-D-ribose 1-diphosphate: step 5/9. Its function is as follows. IGPS catalyzes the conversion of PRFAR and glutamine to IGP, AICAR and glutamate. The HisF subunit catalyzes the cyclization activity that produces IGP and AICAR from PRFAR using the ammonia provided by the HisH subunit. The sequence is that of Imidazole glycerol phosphate synthase subunit HisF from Geobacillus sp. (strain WCH70).